Here is a 365-residue protein sequence, read N- to C-terminus: MAEFVRAQIFGTTFEITSRYSDLQPVGMGAFGLVCSARDQLTNQNVAVKKIMKPFSTPVLAKRTYRELKLLKHLKHENVISLSDIFISPLEDIVLRWGCSYFVTELLGTDLHRLLTSRPLEKQFIQYFLYQIMRGLKYVHSAGVVHRDLKPSNILVNENCDLKICDFGLARIQDPQMTGYVSTRYYRAPEIMLTWQKYDVEVDIWSAGCIFAEMLEGKPLFPGKDHVNQFSIITELLGTPPDDVINTIASENTLRFVKSLPKRERQSLKHKFKNADAPAIDLLESMLVFDPKKRITATNALAHEYLAPYHDPTDEPVAEEKFDWSFNDADLPVDTWKIMMYSEILDYHNVEAGVAAMEGQEFNGQ.

In terms of domain architecture, Protein kinase spans 20 to 306 (YSDLQPVGMG…ATNALAHEYL (287 aa)). Residues 26-34 (VGMGAFGLV) and K49 each bind ATP. The active-site Proton acceptor is D148. The TXY motif lies at 178-180 (TGY).

It belongs to the protein kinase superfamily. Ser/Thr protein kinase family. MAP kinase subfamily. HOG1 sub-subfamily. Requires Mg(2+) as cofactor.

Its subcellular location is the cytoplasm. It is found in the nucleus. It carries out the reaction L-seryl-[protein] + ATP = O-phospho-L-seryl-[protein] + ADP + H(+). The catalysed reaction is L-threonyl-[protein] + ATP = O-phospho-L-threonyl-[protein] + ADP + H(+). Proline-directed serine/threonine-protein kinase involved in a signal transduction pathway that is activated by changes in the osmolarity of the extracellular environment. Controls osmotic regulation of transcription of target genes. Involved in environmental stress response, hyphal growth, conidiation and possibly secondary metabolism such as ustiloxin biosynthesis or the biosynthesis of other phytotoxic compounds that are inhibitory to rice shoot growth during seed germination. Plays a key role in responses to cell wall and membrane stresses but not oxidative stress. The sequence is that of Mitogen-activated protein kinase HOG1 from Ustilaginoidea virens (Rice false smut fungus).